Consider the following 541-residue polypeptide: MKLSCLVFLIVSSLVSSSLATAPPNTSIYESFLQCFSNQTGAPPEKLCDVVLPQSSASFTPTLRAYIRNARFNTSTSPKPLLVIAARSECHVQATVLCTKSLNFQLKTRSGGHDYDGVSYISNRPFFVLDMSYLRNITVDMSDDGGSAWVGAGATLGEVYYNIWQSSKTHGTHGFPAGVCPTVGAGGHISGGGYGNMIRKYGLSVDYVTDAKIVDVNGRILDRKSMGEDLFWAIGGGGGASFGVILSFKIKLVPVPPRVTVFRVEKTLVENALDMVHKWQFVAPKTSPDLFMRLMLQPVTRNTTQTVRASVVALFLGKQSDLMSLLTKEFPELGLKPENCTEMTWIQSVMWWANNDNATVIKPEILLDRNPDSASFLKRKSDYVEKEISKDGLDFLCKKLMEAGKLGLVFNPYGGKMSEVATTATPFPHRKRLFKVQHSMNWKDPGTDVESSFMEKTRSFYSYMAPFVTKNPRHTYLNYRDLDIGINSHGPNSYREAEVYGRKYFGENFDRLVKVKTAVDPENFFRDEQSIPTLPTKPSSS.

The N-terminal stretch at Met1–Ala20 is a signal peptide. 7 N-linked (GlcNAc...) asparagine glycosylation sites follow: Asn25, Asn38, Asn73, Asn136, Asn302, Asn339, and Asn357. Cys35 and Cys98 are joined by a disulfide. The region spanning Thr76–Val255 is the FAD-binding PCMH-type domain. The 6-(S-cysteinyl)-8alpha-(pros-histidyl)-FAD (His-Cys) cross-link spans His113–Cys180.

This sequence belongs to the oxygen-dependent FAD-linked oxidoreductase family. It depends on FAD as a cofactor. In terms of processing, the FAD cofactor is bound via a bicovalent 6-S-cysteinyl, 8alpha-N1-histidyl FAD linkage. As to expression, accumulates in cell walls of etiolated hypocotyls.

It is found in the secreted. The protein localises to the cell wall. In Arabidopsis thaliana (Mouse-ear cress), this protein is Berberine bridge enzyme-like 1.